We begin with the raw amino-acid sequence, 362 residues long: tRNA/tmRNA (uracil-C(5))-methyltransferase (362 aa).

5 residues coordinate S-adenosyl-L-methionine: glutamine 186, tyrosine 214, asparagine 219, glutamate 235, and aspartate 295. Cysteine 320 acts as the Nucleophile in catalysis. The active-site Proton acceptor is the glutamate 354.

The protein belongs to the class I-like SAM-binding methyltransferase superfamily. RNA M5U methyltransferase family. TrmA subfamily.

It catalyses the reaction uridine(54) in tRNA + S-adenosyl-L-methionine = 5-methyluridine(54) in tRNA + S-adenosyl-L-homocysteine + H(+). It carries out the reaction uridine(341) in tmRNA + S-adenosyl-L-methionine = 5-methyluridine(341) in tmRNA + S-adenosyl-L-homocysteine + H(+). In terms of biological role, dual-specificity methyltransferase that catalyzes the formation of 5-methyluridine at position 54 (m5U54) in all tRNAs, and that of position 341 (m5U341) in tmRNA (transfer-mRNA). This Ectopseudomonas mendocina (strain ymp) (Pseudomonas mendocina) protein is tRNA/tmRNA (uracil-C(5))-methyltransferase.